The chain runs to 88 residues: Conotoxin VxVIB (88 aa).

The N-terminal stretch at 1–22 (MNLACVLIVAVLFLTASQLATA) is a signal peptide. Positions 23–52 (ASYARDKQEYPAVRSSDEMQDSEDLTLTKE) are excised as a propeptide. 3 disulfide bridges follow: C53–C68, C60–C72, and C67–C81.

Expressed by the venom duct.

Its subcellular location is the secreted. Functionally, may act as a neurotoxin, but produces no obvious effect on ionic currents when tested on the mouse dorsal rooted ganglia (DRG). This Conus vexillum (Flag cone) protein is Conotoxin VxVIB.